A 262-amino-acid chain; its full sequence is Phosphonates import ATP-binding protein PhnC (262 aa).

Positions 5-253 constitute an ABC transporter domain; sequence IRVEKLAKTF…RFDHLYRSIN (249 aa). ATP is bound at residue 37 to 44; that stretch reads GPSGSGKS.

This sequence belongs to the ABC transporter superfamily. Phosphonates importer (TC 3.A.1.9.1) family. The complex is composed of two ATP-binding proteins (PhnC), two transmembrane proteins (PhnE) and a solute-binding protein (PhnD).

The protein resides in the cell inner membrane. It catalyses the reaction phosphonate(out) + ATP + H2O = phosphonate(in) + ADP + phosphate + H(+). Part of the ABC transporter complex PhnCDE involved in phosphonates import. Responsible for energy coupling to the transport system. In Escherichia coli O6:K15:H31 (strain 536 / UPEC), this protein is Phosphonates import ATP-binding protein PhnC.